The chain runs to 464 residues: METEQPEETFPNTETNGEFGKRPAEDMEEEQAFKRSRNTDEMVELRILLQSKNAGAVIGKGGKNIKALRTDYNASVSVPDSSGPERILSISADIETIGEILKKIIPTLEEGLQLPSPTATSQLPLESDAVECLNYQHYKGSDFDCELRLLIHQSLAGGIIGVKGAKIKELRENTQTTIKLFQECCPHSTDRVVLIGGKPDRVVECIKIILDLISESPIKGRAQPYDPNFYDETYDYGGFTMMFDDRRGRPVGFPMRGRGGFDRMPPGRGGRPMPPSRRDYDDMSPRRGPPPPPPGRGGRGGSRARNLPLPPPPPPRGGDLMAYDRRGRPGDRYDGMVGFSADETWDSAIDTWSPSEWQMAYEPQGGSGYDYSYAGGRGSYGDLGGPIITTQVTIPKDLAGSIIGKGGQRIKQIRHESGASIKIDEPLEGSEDRIITITGTQDQIQNAQYLLQNSVKQYADVEGF.

Met-1 carries the N-acetylmethionine modification. A disordered region spans residues 1–37; that stretch reads METEQPEETFPNTETNGEFGKRPAEDMEEEQAFKRSR. The interval 1–276 is necessary for interaction with DDX1; sequence METEQPEETF…GRGGRPMPPS (276 aa). A compositionally biased stretch (basic and acidic residues) spans 19 to 37; the sequence is FGKRPAEDMEEEQAFKRSR. Lys-34 bears the N6-acetyllysine; alternate mark. Lys-34 is covalently cross-linked (Glycyl lysine isopeptide (Lys-Gly) (interchain with G-Cter in SUMO1); alternate). Residue Lys-34 forms a Glycyl lysine isopeptide (Lys-Gly) (interchain with G-Cter in SUMO2); alternate linkage. Residue Ser-36 is modified to Phosphoserine. At Thr-39 the chain carries Phosphothreonine. The KH 1 domain maps to 42–104; it reads MVELRILLQS…ETIGEILKKI (63 aa). Glycyl lysine isopeptide (Lys-Gly) (interchain with G-Cter in SUMO2) cross-links involve residues Lys-52 and Lys-60. A run of 2 repeats spans residues 54–76 and 59–62. The segment at 54 to 421 is 2 X 22 AA approximate repeats; it reads AGAVIGKGGK…QIRHESGASI (368 aa). Residues 59-407 are 5 X 4 AA repeats of G-X-G-G; that stretch reads GKGGKNIKAL…LAGSIIGKGG (349 aa). A phosphoserine mark is found at Ser-75 and Ser-116. Positions 144–209 constitute a KH 2 domain; that stretch reads DCELRLLIHQ…DRVVECIKII (66 aa). A Glycyl lysine isopeptide (Lys-Gly) (interchain with G-Cter in SUMO1); alternate cross-link involves residue Lys-163. A Glycyl lysine isopeptide (Lys-Gly) (interchain with G-Cter in SUMO2); alternate cross-link involves residue Lys-163. An N6-acetyllysine modification is found at Lys-198. A phosphoserine mark is found at Ser-214 and Ser-216. Lys-219 is covalently cross-linked (Glycyl lysine isopeptide (Lys-Gly) (interchain with G-Cter in SUMO2); alternate). At Lys-219 the chain carries N6-succinyllysine; alternate. Positions 236-273 are RNA-binding RGG-box; sequence YGGFTMMFDDRRGRPVGFPMRGRGGFDRMPPGRGGRPM. 3 tandem repeats follow at residues 245 to 250, 257 to 260, and 267 to 270. The 2 X 6 AA approximate repeats stretch occupies residues 245 to 329; sequence DRRGRPVGFP…LMAYDRRGRP (85 aa). Positions 250 to 329 are disordered; the sequence is PVGFPMRGRG…LMAYDRRGRP (80 aa). A compositionally biased stretch (low complexity) spans 252-266; it reads GFPMRGRGGFDRMPP. Residues 276-285 show a composition bias toward basic and acidic residues; sequence SRRDYDDMSP. Position 284 is a phosphoserine (Ser-284). The stretch at 295–298 is one 3-4 repeat; it reads GRGG. Arg-316 is modified (omega-N-methylarginine). The stretch at 324–329 is one 2-2 repeat; sequence DRRGRP. An Omega-N-methylarginine modification is found at Arg-377. Ser-379 is subject to Phosphoserine. Tyr-380 bears the Phosphotyrosine mark. Positions 387-451 constitute a KH 3 domain; it reads IITTQVTIPK…DQIQNAQYLL (65 aa). A run of 2 repeats spans residues 399–421 and 404–407. N6-acetyllysine; alternate is present on Lys-405. A Glycyl lysine isopeptide (Lys-Gly) (interchain with G-Cter in SUMO2); alternate cross-link involves residue Lys-405. At Ser-420 the chain carries Phosphoserine. Lys-422 is covalently cross-linked (Glycyl lysine isopeptide (Lys-Gly) (interchain with G-Cter in SUMO1); alternate). Residue Lys-422 forms a Glycyl lysine isopeptide (Lys-Gly) (interchain with G-Cter in SUMO2); alternate linkage. Lys-422 participates in a covalent cross-link: Glycyl lysine isopeptide (Lys-Gly) (interchain with G-Cter in SUMO); alternate.

Identified in the spliceosome C complex. Interacts with ANKRD28, RBM42 and ZIK1. Interacts with DDX1. Interacts with MDM2; this interaction leads to ubiquitination and proteasomal degradation. Interacts with p53/TP53. Interacts with BRDT. Interacts with IVNS1ABP. Interacts with PPIA/CYPA. Part of a transcription inhibitory ribonucleoprotein complex composed at least of the circular RNA circZNF827, ZNF827 and HNRNPL. In terms of processing, sumoylated by CBX4. Sumoylation is increased upon DNA damage, such as that produced by doxorubicin, etoposide, UV light and camptothecin, due to enhanced CBX4 phosphorylation by HIPK2 under these conditions. Post-translationally, ubiquitinated by MDM2. Doxorubicin treatment does not affect monoubiquitination, but slightly decreases HNRNPK poly-ubiquitination. O-glycosylated (O-GlcNAcylated), in a cell cycle-dependent manner.

Its subcellular location is the cytoplasm. It is found in the nucleus. The protein localises to the nucleoplasm. The protein resides in the cell projection. It localises to the podosome. Its function is as follows. One of the major pre-mRNA-binding proteins. Binds tenaciously to poly(C) sequences. Likely to play a role in the nuclear metabolism of hnRNAs, particularly for pre-mRNAs that contain cytidine-rich sequences. Can also bind poly(C) single-stranded DNA. Plays an important role in p53/TP53 response to DNA damage, acting at the level of both transcription activation and repression. When sumoylated, acts as a transcriptional coactivator of p53/TP53, playing a role in p21/CDKN1A and 14-3-3 sigma/SFN induction. As far as transcription repression is concerned, acts by interacting with long intergenic RNA p21 (lincRNA-p21), a non-coding RNA induced by p53/TP53. This interaction is necessary for the induction of apoptosis, but not cell cycle arrest. As part of a ribonucleoprotein complex composed at least of ZNF827, HNRNPL and the circular RNA circZNF827 that nucleates the complex on chromatin, may negatively regulate the transcription of genes involved in neuronal differentiation. This chain is Heterogeneous nuclear ribonucleoprotein K (HNRNPK), found in Macaca fascicularis (Crab-eating macaque).